The primary structure comprises 405 residues: Deoxyguanosinetriphosphate triphosphohydrolase-like protein (405 aa).

The region spanning 75-219 (RLTHTIEVAQ…AAIADDIAYN (145 aa)) is the HD domain.

This sequence belongs to the dGTPase family. Type 2 subfamily.

The protein is Deoxyguanosinetriphosphate triphosphohydrolase-like protein of Rhizobium etli (strain CIAT 652).